A 237-amino-acid polypeptide reads, in one-letter code: 4-hydroxy-tetrahydrodipicolinate reductase (237 aa).

Residues 11–16, 92–94, and 116–119 each bind NAD(+); these read GASGRM, GTT, and GSNF. Residue H148 is the Proton donor/acceptor of the active site. A (S)-2,3,4,5-tetrahydrodipicolinate-binding site is contributed by H149. Residue K152 is the Proton donor of the active site. 158-159 contributes to the (S)-2,3,4,5-tetrahydrodipicolinate binding site; that stretch reads GS.

The protein belongs to the DapB family.

It localises to the cytoplasm. The catalysed reaction is (S)-2,3,4,5-tetrahydrodipicolinate + NAD(+) + H2O = (2S,4S)-4-hydroxy-2,3,4,5-tetrahydrodipicolinate + NADH + H(+). The enzyme catalyses (S)-2,3,4,5-tetrahydrodipicolinate + NADP(+) + H2O = (2S,4S)-4-hydroxy-2,3,4,5-tetrahydrodipicolinate + NADPH + H(+). It participates in amino-acid biosynthesis; L-lysine biosynthesis via DAP pathway; (S)-tetrahydrodipicolinate from L-aspartate: step 4/4. Its function is as follows. Catalyzes the conversion of 4-hydroxy-tetrahydrodipicolinate (HTPA) to tetrahydrodipicolinate. The chain is 4-hydroxy-tetrahydrodipicolinate reductase from Xylella fastidiosa (strain 9a5c).